A 428-amino-acid chain; its full sequence is Aspartic protease 10 (428 aa).

An N-terminal signal peptide occupies residues 1–16 (MKTFIALLALLTVVSA). The 354-residue stretch at 72-425 (YMVQISLGSP…DMKSGRLGLA (354 aa)) folds into the Peptidase A1 domain. D90 is a catalytic residue. N155 and N191 each carry an N-linked (GlcNAc...) asparagine glycan. Residue D318 is part of the active site. C353 and C385 are joined by a disulfide.

The protein belongs to the peptidase A1 family. In terms of processing, proteolytically cleaved. In terms of tissue distribution, synthesized in the intestine. When secreted in low heme conditions, localizes to neurons near the anterior and posterior regions of the body and in coelomocytes.

It localises to the secreted. Functionally, aspartic protease which plays a role in heme homeostasis and mediates inter-organ signaling between the intestine and extra-intestinal tissues when cellular heme levels are low. This Caenorhabditis elegans protein is Aspartic protease 10.